A 479-amino-acid polypeptide reads, in one-letter code: 6-phosphogluconate dehydrogenase, decarboxylating (479 aa).

NADP(+) contacts are provided by residues 9 to 14, 32 to 34, 77 to 79, and Asn-105; these read GLGVMG, NRT, and VQA. Substrate contacts are provided by residues Asn-105 and 131–133; that span reads SGG. Residue Lys-186 is the Proton acceptor of the active site. Residue 189 to 190 participates in substrate binding; the sequence is HN. Catalysis depends on Glu-193, which acts as the Proton donor. Positions 194, 263, 290, 454, and 460 each coordinate substrate.

It belongs to the 6-phosphogluconate dehydrogenase family. As to quaternary structure, homodimer.

It catalyses the reaction 6-phospho-D-gluconate + NADP(+) = D-ribulose 5-phosphate + CO2 + NADPH. It participates in carbohydrate degradation; pentose phosphate pathway; D-ribulose 5-phosphate from D-glucose 6-phosphate (oxidative stage): step 3/3. Its function is as follows. Catalyzes the oxidative decarboxylation of 6-phosphogluconate to ribulose 5-phosphate and CO(2), with concomitant reduction of NADP to NADPH. In Trypanosoma brucei brucei, this protein is 6-phosphogluconate dehydrogenase, decarboxylating (GND).